A 315-amino-acid polypeptide reads, in one-letter code: Protein ORANGE-LIKE, chloroplastic (315 aa).

Residues 1-16 (MTCFSSATPHRHHLLL) constitute a chloroplast transit peptide. The next 2 helical transmembrane spans lie at 155–175 (LYST…LIAP) and 207–227 (IVAS…LIEV). The segment at 225–307 (IEVNNVKQQE…CTGMVTASEH (83 aa)) adopts a CR-type zinc-finger fold. One copy of the CXXCXGXG motif repeat lies at 238 to 245 (CKYCLGTG). Residues 249–256 (CARCSASG) form a CXXCXXXG motif repeat. A CXXCXGXG motif repeat occupies 282 to 289 (CLNCSGAG). A CXXCXXXG motif repeat occupies 293–300 (CPTCLCTG).

This sequence belongs to the orange-like family. As to quaternary structure, interacts with PSY1.

It is found in the plastid. It localises to the chloroplast membrane. Its function is as follows. May be associated with accumulation of carotenoids in chromoplasts. The sequence is that of Protein ORANGE-LIKE, chloroplastic (ORLIKE) from Arabidopsis thaliana (Mouse-ear cress).